The chain runs to 118 residues: Non-specific lipid-transfer protein (118 aa).

An N-terminal signal peptide occupies residues 1-27; that stretch reads MGVSKVAIAVAVMLMVVVINHPAVVEG. Intrachain disulfides connect Cys30-Cys75, Cys40-Cys54, Cys55-Cys100, and Cys77-Cys114.

This sequence belongs to the plant LTP family. Post-translationally, disulfide bonds.

Plant non-specific lipid-transfer proteins transfer phospholipids as well as galactolipids across membranes. May play a role in wax or cutin deposition in the cell walls of expanding epidermal cells and certain secretory tissues. The chain is Non-specific lipid-transfer protein from Apium graveolens (Celery).